The following is a 281-amino-acid chain: Probable endonuclease 4 (281 aa).

Residues His69, His109, Glu145, Asp179, His182, His216, Asp229, His231, and Glu261 each contribute to the Zn(2+) site.

Belongs to the AP endonuclease 2 family. Zn(2+) serves as cofactor.

It catalyses the reaction Endonucleolytic cleavage to 5'-phosphooligonucleotide end-products.. In terms of biological role, endonuclease IV plays a role in DNA repair. It cleaves phosphodiester bonds at apurinic or apyrimidinic (AP) sites, generating a 3'-hydroxyl group and a 5'-terminal sugar phosphate. This Aeromonas salmonicida (strain A449) protein is Probable endonuclease 4.